The primary structure comprises 89 residues: Barrier-to-autointegration factor (89 aa).

The residue at position 1 (methionine 1) is an N-acetylmethionine. Threonine 2 bears the N-acetylthreonine; in Barrier-to-autointegration factor, N-terminally processed mark. 2 positions are modified to phosphothreonine; by VRK1 and VRK2: threonine 2 and threonine 3. At serine 4 the chain carries Phosphoserine; by VRK1 and VRK2. One can recognise a HhH domain in the interval 20–35 (VGSLAGIGDVLSKRLE).

It belongs to the BAF family. In terms of assembly, homodimer. Heterodimerizes with BANF2. Interacts with ANKLE2/LEM4, leading to decreased phosphorylation by VRK1 and promoting dephosphorylation by protein phosphatase 2A (PP2A). Binds non-specifically to double-stranded DNA, and is found as a hexamer or dodecamer upon DNA binding. Binds to LEM domain-containing nuclear proteins such as LEMD3/MAN1, TMPO/LAP2 and EMD (emerin). Interacts with ANKLE1 (via LEM domain); the interaction may favor BANF1 dimerization. Interacts with CRX and LMNA (lamin-A). Binds linker histone H1.1 and core histones H3. Interacts with LEMD2 (via LEM domain). Interacts with PARP1; interaction takes place in response to oxidative DNA damage. Ser-4 is the major site of phosphorylation as compared to Thr-2 and Thr-3. Phosphorylation on Thr-2; Thr-3 and Ser-4 disrupts its ability to bind DNA and reduces its ability to bind LEM domain-containing proteins. Non phosphorylated BAF seems to enhance binding between EMD and LMNA. Dephosphorylated by protein phosphatase 2A (PP2A) following interaction with ANKLE2/LEM4 during mitotic exit, leading to mitotic nuclear envelope reassembly.

Its subcellular location is the nucleus. It localises to the chromosome. It is found in the nucleus envelope. The protein resides in the cytoplasm. Non-specific DNA-binding protein that plays key roles in mitotic nuclear reassembly, chromatin organization, DNA damage response, gene expression and intrinsic immunity against foreign DNA. Contains two non-specific double-stranded DNA (dsDNA)-binding sites which promote DNA cross-bridging. Plays a key role in nuclear membrane reformation at the end of mitosis by driving formation of a single nucleus in a spindle-independent manner. Transiently cross-bridges anaphase chromosomes via its ability to bridge distant DNA sites, leading to the formation of a dense chromatin network at the chromosome ensemble surface that limits membranes to the surface. Also acts as a negative regulator of innate immune activation by restricting CGAS activity toward self-DNA upon acute loss of nuclear membrane integrity. Outcompetes CGAS for DNA-binding, thereby preventing CGAS activation and subsequent damaging autoinflammatory responses. Also involved in DNA damage response: interacts with PARP1 in response to oxidative stress, thereby inhibiting the ADP-ribosyltransferase activity of PARP1. Involved in the recognition of exogenous dsDNA in the cytosol: associates with exogenous dsDNA immediately after its appearance in the cytosol at endosome breakdown and is required to avoid autophagy. This chain is Barrier-to-autointegration factor, found in Mus musculus (Mouse).